Consider the following 114-residue polypeptide: DNA-binding protein rrnAC3180 (114 aa).

Residues 1–11 are compositionally biased toward acidic residues; that stretch reads MSGDPSEEELE. Residues 1-45 are disordered; sequence MSGDPSEEELEELRKKKMEQLKEQQGGEGEGQEAAQQQAEAQKQA. Basic and acidic residues predominate over residues 12-22; sequence ELRKKKMEQLK. The span at 32–45 shows a compositional bias: low complexity; sequence QEAAQQQAEAQKQA.

It belongs to the PDCD5 family.

In Haloarcula marismortui (strain ATCC 43049 / DSM 3752 / JCM 8966 / VKM B-1809) (Halobacterium marismortui), this protein is DNA-binding protein rrnAC3180.